A 746-amino-acid chain; its full sequence is 1,4-alpha-glucan branching enzyme GlgB (746 aa).

Catalysis depends on Asp-418, which acts as the Nucleophile. Residue Glu-471 is the Proton donor of the active site.

It belongs to the glycosyl hydrolase 13 family. GlgB subfamily. As to quaternary structure, monomer.

The catalysed reaction is Transfers a segment of a (1-&gt;4)-alpha-D-glucan chain to a primary hydroxy group in a similar glucan chain.. Its pathway is glycan biosynthesis; glycogen biosynthesis. Its function is as follows. Catalyzes the formation of the alpha-1,6-glucosidic linkages in glycogen by scission of a 1,4-alpha-linked oligosaccharide from growing alpha-1,4-glucan chains and the subsequent attachment of the oligosaccharide to the alpha-1,6 position. This Nitrosospira multiformis (strain ATCC 25196 / NCIMB 11849 / C 71) protein is 1,4-alpha-glucan branching enzyme GlgB.